The sequence spans 200 residues: Adenylate kinase (200 aa).

Residue 10-15 coordinates ATP; the sequence is GAGKGT. Residues 30–59 form an NMP region; sequence STGDMLRAAVAAGTPVGLEAKSIMESGGLV. Residues Thr31, Arg36, 57–59, 85–88, and Gln92 contribute to the AMP site; these read GLV and GFPR. Residues 126–142 form an LID region; it reads KRAEETAARGQPVRKDD. Arg127 lines the ATP pocket. Positions 139 and 150 each coordinate AMP. Residue Lys178 participates in ATP binding.

Belongs to the adenylate kinase family. As to quaternary structure, monomer.

Its subcellular location is the cytoplasm. It catalyses the reaction AMP + ATP = 2 ADP. It participates in purine metabolism; AMP biosynthesis via salvage pathway; AMP from ADP: step 1/1. Its function is as follows. Catalyzes the reversible transfer of the terminal phosphate group between ATP and AMP. Plays an important role in cellular energy homeostasis and in adenine nucleotide metabolism. This is Adenylate kinase from Methylorubrum populi (strain ATCC BAA-705 / NCIMB 13946 / BJ001) (Methylobacterium populi).